Consider the following 194-residue polypeptide: Ion-translocating oxidoreductase complex subunit A (194 aa).

6 consecutive transmembrane segments (helical) span residues methionine 1 to valine 21, cysteine 48 to phenylalanine 68, leucine 73 to valine 93, leucine 103 to methionine 123, valine 135 to isoleucine 155, and proline 172 to isoleucine 192.

It belongs to the NqrDE/RnfAE family. As to quaternary structure, the complex is composed of six subunits: RnfA, RnfB, RnfC, RnfD, RnfE and RnfG.

The protein localises to the cell inner membrane. Functionally, part of a membrane-bound complex that couples electron transfer with translocation of ions across the membrane. This Buchnera aphidicola subsp. Baizongia pistaciae (strain Bp) protein is Ion-translocating oxidoreductase complex subunit A.